The sequence spans 216 residues: Protein Syd (216 aa).

This sequence belongs to the Syd family.

The protein localises to the cell inner membrane. Interacts with the SecY protein in vivo. May bind preferentially to an uncomplexed state of SecY, thus functioning either as a chelating agent for excess SecY in the cell or as a regulatory factor that negatively controls the translocase function. This chain is Protein Syd, found in Shewanella baltica (strain OS185).